The sequence spans 370 residues: Probable G-protein coupled receptor 85 (370 aa).

Residues 1-25 are Extracellular-facing; that stretch reads MANYSHAADNILQNLSPLTAFLKLT. Asn-3 is a glycosylation site (N-linked (GlcNAc...) asparagine). A helical membrane pass occupies residues 26 to 46; it reads SLGFIIGVSVVGNLLISILLA. The Cytoplasmic segment spans residues 47-57; sequence KDKTLHRAPYY. The chain crosses the membrane as a helical span at residues 58-78; it reads FLLDLCCSDILRSAICFPFVF. At 79-96 the chain is on the extracellular side; sequence NSVKNGSTWTYGTLTCKV. An N-linked (GlcNAc...) asparagine glycan is attached at Asn-83. Residues Cys-94 and Cys-172 are joined by a disulfide bond. Residues 97–117 form a helical membrane-spanning segment; the sequence is IAFLGVLSCFHTAFMLFCISV. The Cytoplasmic portion of the chain corresponds to 118–137; the sequence is TRYLAIAHHRFYTKRLTFWT. The helical transmembrane segment at 138-158 threads the bilayer; that stretch reads CLAVICMVWTLSVAMAFPPVL. Over 159–188 the chain is Extracellular; the sequence is DVGTYSFIREEDQCTFQHRSFRANDSLGFM. Asn-182 carries an N-linked (GlcNAc...) asparagine glycan. A helical transmembrane segment spans residues 189-209; it reads LLLALILLATQLVYLKLIFFV. Topologically, residues 210–286 are cytoplasmic; the sequence is HDRRKMKPVQ…FKMEKRISRM (77 aa). A helical transmembrane segment spans residues 287 to 307; that stretch reads FYIMTFLFLTLWGPYLVACYW. At 308–313 the chain is on the extracellular side; that stretch reads RVFARG. Residues 314–334 traverse the membrane as a helical segment; sequence PVVPGGFLTAAVWMSFAQAGI. The Cytoplasmic portion of the chain corresponds to 335-370; sequence NPFVCIFSNRELRRCFSTTLLYCRKSRLPREPYCVI.

It belongs to the G-protein coupled receptor 1 family. As to quaternary structure, interacts with DLG4 and DLG3.

The protein localises to the cell membrane. It is found in the endoplasmic reticulum. In terms of biological role, orphan receptor. The protein is Probable G-protein coupled receptor 85 (GPR85) of Pongo abelii (Sumatran orangutan).